Reading from the N-terminus, the 392-residue chain is 8-amino-7-oxononanoate synthase (392 aa).

Residue Arg-18 coordinates substrate. 105–106 (GY) contributes to the pyridoxal 5'-phosphate binding site. His-130 provides a ligand contact to substrate. Pyridoxal 5'-phosphate-binding residues include Ser-177, His-205, and Thr-234. Lys-237 bears the N6-(pyridoxal phosphate)lysine mark. Thr-351 contributes to the substrate binding site.

It belongs to the class-II pyridoxal-phosphate-dependent aminotransferase family. BioF subfamily. As to quaternary structure, homodimer. The cofactor is pyridoxal 5'-phosphate.

The enzyme catalyses 6-carboxyhexanoyl-[ACP] + L-alanine + H(+) = (8S)-8-amino-7-oxononanoate + holo-[ACP] + CO2. It functions in the pathway cofactor biosynthesis; biotin biosynthesis. In terms of biological role, catalyzes the decarboxylative condensation of pimeloyl-[acyl-carrier protein] and L-alanine to produce 8-amino-7-oxononanoate (AON), [acyl-carrier protein], and carbon dioxide. This chain is 8-amino-7-oxononanoate synthase, found in Thioalkalivibrio sulfidiphilus (strain HL-EbGR7).